Here is a 334-residue protein sequence, read N- to C-terminus: Protein FAM50B (334 aa).

An N-acetylalanine modification is found at A2. The disordered stretch occupies residues 122 to 175 (FTLDEEEGDQEDSRQAESAEAHSAGAKKNLGKNPDVDTSFLPDREREEEENRLR). Composition is skewed to basic and acidic residues over residues 132 to 141 (EDSRQAESAE) and 163 to 175 (PDREREEEENRLR).

The protein belongs to the FAM50 family. Widely expressed. Abundant in testis, where it is expressed in seminiferous tubules, not in the interstitium. At the cellular level, expressed in primary spermatocytes and round spermatids, but not detectable in spermatogonia, elongating spermatids, mature spermatozoa, Sertoli cells or Leydig cells.

This Mus musculus (Mouse) protein is Protein FAM50B (Fam50b).